The chain runs to 369 residues: UDP-3-O-acylglucosamine N-acyltransferase (369 aa).

His-252 functions as the Proton acceptor in the catalytic mechanism. Positions 348-369 (ERRQRGENNAPAQNKQDEEKSS) are disordered.

It belongs to the transferase hexapeptide repeat family. LpxD subfamily. Homotrimer.

It carries out the reaction a UDP-3-O-[(3R)-3-hydroxyacyl]-alpha-D-glucosamine + a (3R)-hydroxyacyl-[ACP] = a UDP-2-N,3-O-bis[(3R)-3-hydroxyacyl]-alpha-D-glucosamine + holo-[ACP] + H(+). The protein operates within bacterial outer membrane biogenesis; LPS lipid A biosynthesis. Catalyzes the N-acylation of UDP-3-O-acylglucosamine using 3-hydroxyacyl-ACP as the acyl donor. Is involved in the biosynthesis of lipid A, a phosphorylated glycolipid that anchors the lipopolysaccharide to the outer membrane of the cell. The polypeptide is UDP-3-O-acylglucosamine N-acyltransferase (Cupriavidus metallidurans (strain ATCC 43123 / DSM 2839 / NBRC 102507 / CH34) (Ralstonia metallidurans)).